The sequence spans 614 residues: MYPLLDRIEIPAQLRNLKRSQLPQLADELRSFLIESVAKTGGHLSSNLGTIELTIALHYIFDTPFDRLVWDVGHQTYAHKILTGRRTGMAHLRMQGGIAGFPRRDESEYDAFGTAHSSTSISAALGMAVAARINKIKQHAIAIIGDGAMSAGMAFEALNNAGVMDADLLVILNDNDMSISPPVGALNHYLAKLMSGRFYATARRAGERMLGVVPPVLELAKRAEEHVKGMVTPGTLFEEFGFNYIGPIDGHDLDILLTTLNNIKQLDGPQFLHIVTRKGKGYKPAEEDPVLYHGVGKFEPGKGVIPKPSTRPAYTQIFGDWLCDMAAKDSRLIGITPAMREGSGLIRFSKEYPDRYFDVGIAEQHAVTFAAGAACEGLKPVVAIYSTFLQRAYDQLIHDVAIQNLPVVFAIDRAGLVGADGPTHAGSFDLSYLRCIPNITVMMPADENECRQMLYTAFQLDTPTAVRYPRGTGPGVQIKQEMQIVPLGKGEIRRQGTRIALLAFGSMLSPCLEAGDELDATVVNMRFVKPLDQELVMTLAAEHELLVTVEENTIMGGAGSAVLECLASQGVNIRLLQLGLSDNFLDQGDPAQMLSDCGLDKTGIIKSVKERLSL.

Residues histidine 74 and 115 to 117 (AHS) contribute to the thiamine diphosphate site. Residue aspartate 146 coordinates Mg(2+). Residues 147-148 (GA), asparagine 175, tyrosine 282, and glutamate 363 each bind thiamine diphosphate. Asparagine 175 is a binding site for Mg(2+).

Belongs to the transketolase family. DXPS subfamily. As to quaternary structure, homodimer. The cofactor is Mg(2+). Thiamine diphosphate serves as cofactor.

The catalysed reaction is D-glyceraldehyde 3-phosphate + pyruvate + H(+) = 1-deoxy-D-xylulose 5-phosphate + CO2. The protein operates within metabolic intermediate biosynthesis; 1-deoxy-D-xylulose 5-phosphate biosynthesis; 1-deoxy-D-xylulose 5-phosphate from D-glyceraldehyde 3-phosphate and pyruvate: step 1/1. Catalyzes the acyloin condensation reaction between C atoms 2 and 3 of pyruvate and glyceraldehyde 3-phosphate to yield 1-deoxy-D-xylulose-5-phosphate (DXP). This Nitrosomonas eutropha (strain DSM 101675 / C91 / Nm57) protein is 1-deoxy-D-xylulose-5-phosphate synthase.